Consider the following 135-residue polypeptide: Histone H1, macronuclear (135 aa).

Residues 1–17 (MPAKTATAVKRTTTTKK) show a composition bias toward low complexity. The disordered stretch occupies residues 1 to 135 (MPAKTATAVK…GGKKKSAKKN (135 aa)). Composition is skewed to basic residues over residues 18 to 54 (SAAK…RRTP) and 62 to 79 (KATK…RSAT). The segment covering 80 to 112 (KKTTAAPAAAAAPATDAPAAAATPSKATGSAKK) has biased composition (low complexity). Basic residues predominate over residues 113-135 (ASARKSSAKKPAKGGKKKSAKKN).

It localises to the nucleus. The protein localises to the chromosome. Histones H1 are necessary for the condensation of nucleosome chains into higher-order structures. The sequence is that of Histone H1, macronuclear from Euplotes eurystomus (Ciliate).